The primary structure comprises 313 residues: Protein OPG185 (313 aa).

The first 16 residues, 1–16 (MTRLSILLLLISLVYS), serve as a signal peptide directing secretion. The Virion surface portion of the chain corresponds to 17 to 277 (TPYPQTQISK…GKYSTKDYVK (261 aa)). Positions 18 to 121 (PYPQTQISKK…TTNDTDKVDY (104 aa)) constitute an Ig-like V-type domain. C36 and C105 are disulfide-bonded. Residues N71, N114, N163, N182, and N262 are each glycosylated (N-linked (GlcNAc...) asparagine; by host). Residues 278–301 (VFGIAALIILSAVAIFCITYYICN) form a helical membrane-spanning segment. The Intravirion segment spans residues 302 to 313 (KRSRKYKTENKV).

It belongs to the orthopoxvirus OPG185 family. As to quaternary structure, heterodimerizes with OPG040. The heterodimer OPG185-OPG040 interacts with components of the entry fusion complex OPG143 and OPG094. Heterodimer with C3/VPC protein; disulfide-linked. Post-translationally, glycosylated; contains phosphate and sulfate-substituted glycans. O-glycosylation is required for hemagglutination and hemadsorption activities of infected cell membranes.

The protein resides in the virion membrane. The protein localises to the host membrane. Prevents cell to cell fusion by interacting with and directing the viral OPG040 protein on the host plasma membrane. The OPG185-OPG040 complex associates with components of the entry fusion complex (EFC) presumably to avoid superinfection and syncytium formation. Via its interaction with C3/VCP protein, protects the infected cell and probably also the extracellular enveloped virus from complement attack. The sequence is that of Protein OPG185 (OPG185) from Homo sapiens (Human).